A 449-amino-acid polypeptide reads, in one-letter code: 23S rRNA (uracil(1939)-C(5))-methyltransferase RlmD (449 aa).

One can recognise a TRAM domain in the interval 12–70 (SKQLSAKQSFSVHQLDHLGAGIAQHQGKVVFIPGALPSETVQAQLTEQKKNYARAKLIK). Residues cysteine 83, cysteine 89, cysteine 92, and cysteine 170 each contribute to the [4Fe-4S] cluster site. Positions 282, 311, 316, 332, 359, and 379 each coordinate S-adenosyl-L-methionine. Cysteine 405 (nucleophile) is an active-site residue.

It belongs to the class I-like SAM-binding methyltransferase superfamily. RNA M5U methyltransferase family. RlmD subfamily.

It carries out the reaction uridine(1939) in 23S rRNA + S-adenosyl-L-methionine = 5-methyluridine(1939) in 23S rRNA + S-adenosyl-L-homocysteine + H(+). Its function is as follows. Catalyzes the formation of 5-methyl-uridine at position 1939 (m5U1939) in 23S rRNA. The chain is 23S rRNA (uracil(1939)-C(5))-methyltransferase RlmD from Shewanella sp. (strain MR-7).